We begin with the raw amino-acid sequence, 189 residues long: Accessory gene regulator protein B (189 aa).

The next 5 membrane-spanning stretches (helical) occupy residues 50-70 (VSLLCHMFLYTLTVHLTFFFI), 83-103 (LLCYIQSVIYFVLLPWIVGYV), 105-125 (VSSLIMYTLALVGLIIISIYA), 143-163 (KIKAICLTLIFLLISLFLNEP), and 164-184 (YQQLMLLGIVIISILQFPIFF).

It belongs to the AgrB family.

The protein localises to the cell membrane. Essential for the production of a quorum sensing system signal molecule, the autoinducing peptide (AIP). This quorum sensing system is responsible for the regulation of the expression of virulence factor genes. Involved in the proteolytic processing of AgrD, the precursor of AIP. This is Accessory gene regulator protein B from Staphylococcus saprophyticus subsp. saprophyticus (strain ATCC 15305 / DSM 20229 / NCIMB 8711 / NCTC 7292 / S-41).